A 418-amino-acid polypeptide reads, in one-letter code: Nucleoside permease NupG (418 aa).

The Cytoplasmic portion of the chain corresponds to 1-4; it reads MNLK. Residues 5-29 traverse the membrane as a helical segment; the sequence is LQLKILSFLQFCLWGSWLTTLGSYM. The Periplasmic portion of the chain corresponds to 30 to 36; that stretch reads FVTLKFD. A helical membrane pass occupies residues 37 to 58; that stretch reads GASIGAVYSSLGIAAVFMPALL. The Cytoplasmic segment spans residues 59-67; that stretch reads GIVADKWLS. Residues 68–88 traverse the membrane as a helical segment; sequence AKWVYAICHTIGAITLFMAAQ. Residues 89–91 lie on the Periplasmic side of the membrane; it reads VTT. Residues 92-113 form a helical membrane-spanning segment; that stretch reads PEAMFLVILINSFAYMPTLGLI. The Cytoplasmic portion of the chain corresponds to 114 to 135; sequence NTISYYRLQNAGMDIVTDFPPI. The chain crosses the membrane as a helical span at residues 136–156; sequence RIWGTIGFIMAMWVVSLSGFE. Residues 157 to 158 lie on the Periplasmic side of the membrane; the sequence is LS. A helical membrane pass occupies residues 159 to 178; sequence HMQLYIGAALSAILVLFTLT. At 179–209 the chain is on the cytoplasmic side; that stretch reads LPHIPVAKQQANQSWTTLLGLDAFALFKNKR. Residues 210–236 form a helical membrane-spanning segment; sequence MAIFFIFSMLLGAELQITNMFGNTFLH. Residues 237–247 lie on the Periplasmic side of the membrane; sequence SFDKDPMFASS. The chain crosses the membrane as a helical span at residues 248–268; it reads FIVQHASIIMSISQISETLFI. The Cytoplasmic portion of the chain corresponds to 269–280; it reads LTIPFFLSRYGI. The chain crosses the membrane as a helical span at residues 281 to 300; sequence KNVMMISIVAWILRFALFAY. Over 301–305 the chain is Periplasmic; the sequence is GDPTP. Residues 306 to 326 traverse the membrane as a helical segment; sequence FGTVLLVLSMIVYGCAFDFFN. Residues 327-346 lie on the Cytoplasmic side of the membrane; sequence ISGSVFVEKEVSPAIRASAQ. The chain crosses the membrane as a helical span at residues 347-369; it reads GMFLMMTNGFGCILGGIVSGKVV. Residues 370 to 379 lie on the Periplasmic side of the membrane; sequence EMYTQNGITD. A helical membrane pass occupies residues 380–403; it reads WQTVWLIFAGYSVVLAFAFMAMFK. Topologically, residues 404–418 are cytoplasmic; it reads YKHVRVPTGTQTVSH.

This sequence belongs to the major facilitator superfamily. Nucleoside:H(+) symporter (NHS) (TC 2.A.1.10) family.

It is found in the cell inner membrane. The catalysed reaction is adenosine(in) + H(+)(in) = adenosine(out) + H(+)(out). It catalyses the reaction uridine(in) + H(+)(in) = uridine(out) + H(+)(out). It carries out the reaction thymidine(in) + H(+)(in) = thymidine(out) + H(+)(out). The enzyme catalyses cytidine(in) + H(+)(in) = cytidine(out) + H(+)(out). The catalysed reaction is 2'-deoxycytidine(in) + H(+)(in) = 2'-deoxycytidine(out) + H(+)(out). It catalyses the reaction guanosine(in) + H(+)(in) = guanosine(out) + H(+)(out). It carries out the reaction inosine(in) + H(+)(in) = inosine(out) + H(+)(out). Inhibited by the protonophore uncouplers 2,4-dinitrophenol and carbonyl cyanide m-chlorophenylhydrazone (CCCP), and by valinomycin. Inhibited by the nucleoside antibiotic showdomycin. Functionally, broad-specificity transporter of purine and pyrimidine nucleosides. Can transport adenosine, uridine, thymidine, cytidine, deoxycytidine, guanosine and inosine. Can also transport xanthosine, but with a very low affinity. Transport is driven by a proton motive force. The protein is Nucleoside permease NupG of Escherichia coli (strain K12).